The following is a 377-amino-acid chain: Nitric oxide reductase FlRd-NAD(+) reductase (377 aa).

This sequence belongs to the FAD-dependent oxidoreductase family. The cofactor is FAD.

The protein resides in the cytoplasm. The catalysed reaction is 2 reduced [nitric oxide reductase rubredoxin domain] + NAD(+) + H(+) = 2 oxidized [nitric oxide reductase rubredoxin domain] + NADH. It participates in nitrogen metabolism; nitric oxide reduction. One of at least two accessory proteins for anaerobic nitric oxide (NO) reductase. Reduces the rubredoxin moiety of NO reductase. The chain is Nitric oxide reductase FlRd-NAD(+) reductase from Escherichia coli (strain SMS-3-5 / SECEC).